Reading from the N-terminus, the 325-residue chain is uncharacterized protein (325 aa).

The disordered stretch occupies residues 108–141 (PHRTQGISSTSSKSSKGGKKTPVRSTPKEIKKAT).

This is an uncharacterized protein from Homo sapiens (Human).